Here is a 330-residue protein sequence, read N- to C-terminus: Ribose operon repressor (330 aa).

In terms of domain architecture, HTH lacI-type spans 2-56; the sequence is ATMKDVARLAGVSTSTVSHVINKDRFVSEAITAKVEAAIKELNYAPSALARSLKL. A DNA-binding region (H-T-H motif) is located at residues 4–23; the sequence is MKDVARLAGVSTSTVSHVIN.

Its function is as follows. Transcriptional repressor for the ribose rbsDACBK operon. RbsR binds to a region of perfect dyad symmetry spanning the rbs operon transcriptional start site. The affinity for the rbs operator is reduced by addition of ribose, consistent with ribose being the inducer of the operon. The sequence is that of Ribose operon repressor (rbsR) from Escherichia coli O6:H1 (strain CFT073 / ATCC 700928 / UPEC).